Reading from the N-terminus, the 421-residue chain is EGFR adapter protein (421 aa).

Disordered regions lie at residues 18–94 (TFIS…PQLQ), 109–154 (DVQE…RLVD), 173–194 (EDSRPLMHSTCGSSLTSGSGCG), and 372–396 (PVPLTLPRPPSTRSQRSQGAYAGGT). Positions 21–30 (SSSSASSSSS) are enriched in low complexity. Residues 62–89 (FFHHHHPPAHPHPPRQQPHPHSHSHPHP) show a composition bias toward basic residues. Positions 109 to 120 (DVQELSGQEHPH) are enriched in basic and acidic residues. Positions 181–194 (STCGSSLTSGSGCG) are enriched in low complexity. In terms of domain architecture, SH2 spans 286-379 (WFQAGIPREI…LLPVPLTLPR (94 aa)).

As to quaternary structure, may interact (via SH2 domain) with Egfr (when phosphorylated). Detected along the wing margin, with high levels of expression in two stripes of cells on either side of the dorsal/ventral boundary and lower levels of expression in a small region at the anteroposterior boundary (at protein level). High levels of expression along two parallel stripes of cells on either side of the wing pouch dorsal/ventral boundary, and slightly lower levels of expression in a region either side of the anteroposterior boundary. Also expressed in discrete regions of the wing imaginal disk outside of the pouch. Expressed in eye imaginal disk photoreceptors with highest levels of expression in R7 photoreceptor cells.

Involved in the negative regulation of the Egfr/Ras signaling pathway. During wing morphogenesis, may function redundantly with PVRAP to inhibit Egfr activity and prevent uncontrolled cell growth. The protein is EGFR adapter protein of Drosophila melanogaster (Fruit fly).